The sequence spans 701 residues: Ribosomal RNA large subunit methyltransferase K/L (701 aa).

Residues 43–154 (LLYQSLMWSR…KETAHISLDL (112 aa)) enclose the THUMP domain.

Belongs to the methyltransferase superfamily. RlmKL family.

The protein localises to the cytoplasm. The catalysed reaction is guanosine(2445) in 23S rRNA + S-adenosyl-L-methionine = N(2)-methylguanosine(2445) in 23S rRNA + S-adenosyl-L-homocysteine + H(+). It carries out the reaction guanosine(2069) in 23S rRNA + S-adenosyl-L-methionine = N(2)-methylguanosine(2069) in 23S rRNA + S-adenosyl-L-homocysteine + H(+). Functionally, specifically methylates the guanine in position 2445 (m2G2445) and the guanine in position 2069 (m7G2069) of 23S rRNA. The polypeptide is Ribosomal RNA large subunit methyltransferase K/L (Klebsiella pneumoniae subsp. pneumoniae (strain ATCC 700721 / MGH 78578)).